Here is a 156-residue protein sequence, read N- to C-terminus: Succinate dehydrogenase assembly factor 2-B, mitochondrial (156 aa).

The N-terminal 24 residues, 1-24 (MLRQFIVSTVGRRLQLPMMAQSRL), are a transit peptide targeting the mitochondrion.

This sequence belongs to the SDHAF2 family. Interacts with the flavoprotein subunit within the SDH catalytic dimer.

Its subcellular location is the mitochondrion matrix. Functionally, plays an essential role in the assembly of succinate dehydrogenase (SDH), an enzyme complex (also referred to as respiratory complex II) that is a component of both the tricarboxylic acid (TCA) cycle and the mitochondrial electron transport chain, and which couples the oxidation of succinate to fumarate with the reduction of ubiquinone (coenzyme Q) to ubiquinol. Required for flavinylation (covalent attachment of FAD) of the flavoprotein subunit of the SDH catalytic dimer. This Drosophila melanogaster (Fruit fly) protein is Succinate dehydrogenase assembly factor 2-B, mitochondrial.